The primary structure comprises 420 residues: Mannose-1-phosphate guanylyltransferase regulatory subunit alpha (420 aa).

The segment at 2–251 is substrate-binding domain; the sequence is LKAVILIGGP…DGIWSQIKSA (250 aa). Positions 85 and 247 each coordinate GDP-alpha-D-mannose. A hexapeptide repeat domain region spans residues 273–420; that stretch reads LAKHTPGGPR…SRSFTNQIIL (148 aa). Residues 356 to 384 form a C-loop region; it reads TPNDPNPNDPRARMDSESLFKDGKLLPAI.

The protein belongs to the transferase hexapeptide repeat family. As to quaternary structure, component of the GMPPA-GMPPB mannose-1-phosphate guanylyltransferase complex composed of 4 GMPPA subunits and 8 GMPPB subunits; the complex is organized into three layers, a central layer made up of 2 GMPPA dimers sandwiched between two layers each made up of 2 GMPPB dimers.

It localises to the cytoplasm. Regulatory subunit of the GMPPA-GMPPB mannose-1-phosphate guanylyltransferase complex; reduces the catalytic activity of GMPPB when part of the complex. Mediates allosteric feedback inhibition of GMPPB catalytic activity upon binding GDP-alpha-D-mannose. Together with GMPPB regulates GDP-alpha-D-mannose levels. In Papio anubis (Olive baboon), this protein is Mannose-1-phosphate guanylyltransferase regulatory subunit alpha (GMPPA).